The sequence spans 86 residues: Small ribosomal subunit protein bS20 (86 aa).

This sequence belongs to the bacterial ribosomal protein bS20 family.

Functionally, binds directly to 16S ribosomal RNA. This is Small ribosomal subunit protein bS20 from Bifidobacterium adolescentis (strain ATCC 15703 / DSM 20083 / NCTC 11814 / E194a).